The following is a 46-amino-acid chain: uncharacterized protein (46 aa).

This is an uncharacterized protein from Archaeoglobus fulgidus (strain ATCC 49558 / DSM 4304 / JCM 9628 / NBRC 100126 / VC-16).